Here is a 325-residue protein sequence, read N- to C-terminus: Aldo-keto reductase family 1 member A1 (325 aa).

Thr2 carries the post-translational modification N-acetylthreonine. Residue Ser4 is modified to Phosphoserine. NADP(+) contacts are provided by residues 11–20, Thr21, and Trp22; that span reads GQKMPLIGLG. Residue Lys23 is glycosylated (N-linked (Glc) (glycation) lysine). Position 38 is a phosphoserine (Ser38). Asp45 serves as a coordination point for NADP(+). Tyr50 serves as the catalytic Proton donor. Lys68 and Lys85 each carry an N-linked (Glc) (glycation) lysine glycan. Lys127 bears the N6-acetyllysine; alternate mark. Lys127 carries the N6-succinyllysine; alternate modification. A glycan (N-linked (Glc) (glycation) lysine) is linked at Lys141. Lys145 bears the N6-succinyllysine mark. An N-linked (Glc) (glycation) lysine glycan is attached at Lys153. The NADP(+) site is built by Ser162, Asn163, Ser211, Leu213, Ser215, Ser216, Lys263, Ser264, Ile265, Thr266, Arg269, Gln272, and Asn273. A Phosphoserine modification is found at Ser211.

Belongs to the aldo/keto reductase family. As to quaternary structure, monomer. As to expression, widely expressed.

It is found in the cytoplasm. The protein resides in the cytosol. Its subcellular location is the apical cell membrane. The enzyme catalyses a primary alcohol + NADP(+) = an aldehyde + NADPH + H(+). The catalysed reaction is L-gulonate + NADP(+) = aldehydo-D-glucuronate + NADPH + H(+). It carries out the reaction L-gulono-1,4-lactone + NADP(+) = D-glucurono-3,6-lactone + NADPH + H(+). It catalyses the reaction allyl alcohol + NADP(+) = acrolein + NADPH + H(+). The enzyme catalyses glycerol + NADP(+) = D-glyceraldehyde + NADPH + H(+). The catalysed reaction is glycerol + NADP(+) = L-glyceraldehyde + NADPH + H(+). It carries out the reaction hydroxyacetone + NADP(+) = methylglyoxal + NADPH + H(+). It catalyses the reaction 3-deoxyfructose + NADP(+) = 3-deoxyglucosone + NADPH + H(+). The enzyme catalyses (R)-mevalonate + NADP(+) = (R)-mevaldate + NADPH + H(+). The catalysed reaction is pyridine 3-methanol + NADP(+) = pyridine-3-carbaldehyde + NADPH + H(+). It carries out the reaction S-nitroso-CoA + NADPH + H(+) = sulfinamide-CoA + NADP(+). It catalyses the reaction S-nitrosoglutathione + NADPH + H(+) = S-(hydroxysulfenamide)glutathione + NADP(+). In terms of biological role, catalyzes the NADPH-dependent reduction of a wide variety of carbonyl-containing compounds to their corresponding alcohols. Displays enzymatic activity towards endogenous metabolites such as aromatic and aliphatic aldehydes, ketones, monosaccharides and bile acids. Plays an important role in ascorbic acid biosynthesis by catalyzing the reduction of D-glucuronic acid and D-glucurono-gamma-lactone. Functions as a detoxifiying enzyme by reducing a range of toxic aldehydes. Reduces methylglyoxal and 3-deoxyglucosone, which are present at elevated levels under hyperglycemic conditions and are cytotoxic. Involved also in the detoxification of lipid-derived aldehydes like acrolein. Plays a role in the activation of procarcinogens, such as polycyclic aromatic hydrocarbon trans-dihydrodiols, and in the metabolism of various xenobiotics and drugs. Also acts as an inhibitor of protein S-nitrosylation by mediating degradation of S-nitroso-coenzyme A (S-nitroso-CoA), a cofactor required to S-nitrosylate proteins. S-nitroso-CoA reductase activity is involved in reprogramming intermediary metabolism in renal proximal tubules, notably by inhibiting protein S-nitrosylation of isoform 2 of PKM (PKM2). Also acts as a S-nitroso-glutathione reductase by catalyzing the NADPH-dependent reduction of S-nitrosoglutathione. Displays no reductase activity towards retinoids. The chain is Aldo-keto reductase family 1 member A1 (Akr1a1) from Rattus norvegicus (Rat).